The sequence spans 651 residues: Beta-glucuronidase (651 aa).

Residues 1–22 (MLRGPAAVWAALGPLLWACGLA) form the signal peptide. N-linked (GlcNAc...) asparagine glycosylation is found at asparagine 172 and asparagine 419. Glutamate 450 serves as the catalytic Proton donor. N-linked (GlcNAc...) asparagine glycosylation is present at asparagine 630.

This sequence belongs to the glycosyl hydrolase 2 family. As to quaternary structure, homotetramer.

Its subcellular location is the lysosome. The catalysed reaction is a beta-D-glucuronoside + H2O = D-glucuronate + an alcohol. With respect to regulation, inhibited by L-aspartic acid. In terms of biological role, plays an important role in the degradation of dermatan and keratan sulfates. The protein is Beta-glucuronidase (GUSB) of Felis catus (Cat).